The following is a 387-amino-acid chain: NADPH-dependent aldehyde reductase YqhD (387 aa).

Positions 38, 40, 68, 95, 96, 99, 138, 147, 149, 160, 179, and 182 each coordinate NADP(+). 4 residues coordinate Zn(2+): D194, H198, H267, and H281.

Belongs to the iron-containing alcohol dehydrogenase family. Homodimer. The crystals contain two dimers in the asymmetric unit. It depends on Zn(2+) as a cofactor.

It catalyses the reaction a primary alcohol + NADP(+) = an aldehyde + NADPH + H(+). It carries out the reaction butan-1-ol + NADP(+) = butanal + NADPH + H(+). The catalysed reaction is 1-propanol + NADP(+) = propanal + NADPH + H(+). The enzyme catalyses allyl alcohol + NADP(+) = acrolein + NADPH + H(+). Functionally, exhibits NADPH-dependent reductase activity for a broad range of short-chain aldehydes. Shows highest catalytic efficiency toward butanal, propanal and the highly toxic aldehydes acrolein and malondialdehyde (MDA), which are produced mainly during lipid peroxidation. Mediates resistance to reactive oxygen species (ROS) elicitors, such as paraquat and potassium tellurite, probably by protecting the cell against the toxic effects of reactive aldehydes derived from membrane lipid peroxidation. Also acts, with lower efficiency, on acetaldehyde, glyceraldehyde, glycolaldehyde, methylglyoxal, glyoxal and hydroxyacetone. Could be involved in glyoxal metabolism, by catalyzing the reduction of glyoxal to glycolaldehyde, and further to 1,2-ethandiol. Catalyzes the reduction of isobutyraldehyde (2-methylpropanal) to isobutanol, and probably contributes to the production of isobutanol. Can probably catalyze the reduction of glutaraldehyde, a widely used biocide, to 1,5-pentanediol, which is non-toxic. Overexpression of YqhD protects the cells against glutaraldehyde toxicity. Can catalyze in vitro the NADPH-dependent reduction of furfural, a natural product of lignocellulosic decomposition, to the less toxic product, furfuryl alcohol. However, it is unlikely that furfural is a physiological substrate. Its function is as follows. In contrast, Sulzenbacher et al. detected significant activities only in the presence of alcohol and NADP(+). They reported in vitro NADP(+)-dependent alcohol dehydrogenase (ADH) activity towards various alcohols, with a preference for alcohols longer than C(3), but the affinity for the substrates is poor, suggesting that these compounds are not the physiological substrates. Perez et al. did not detect dehydrogenase activity with short and medium chain alcohols such as methanol, ethanol, propanol, butanol or isopropanol. In Escherichia coli (strain K12), this protein is NADPH-dependent aldehyde reductase YqhD (yqhD).